Here is a 253-residue protein sequence, read N- to C-terminus: NADH-quinone oxidoreductase subunit C (253 aa).

Disordered stretches follow at residues 1-33 (MSPD…DTEP) and 234-253 (IPVE…RAYS).

This sequence belongs to the complex I 30 kDa subunit family. In terms of assembly, NDH-1 is composed of 14 different subunits. Subunits NuoB, C, D, E, F, and G constitute the peripheral sector of the complex.

It is found in the cell membrane. It carries out the reaction a quinone + NADH + 5 H(+)(in) = a quinol + NAD(+) + 4 H(+)(out). Its function is as follows. NDH-1 shuttles electrons from NADH, via FMN and iron-sulfur (Fe-S) centers, to quinones in the respiratory chain. The immediate electron acceptor for the enzyme in this species is believed to be a menaquinone. Couples the redox reaction to proton translocation (for every two electrons transferred, four hydrogen ions are translocated across the cytoplasmic membrane), and thus conserves the redox energy in a proton gradient. In Nocardia farcinica (strain IFM 10152), this protein is NADH-quinone oxidoreductase subunit C.